Consider the following 101-residue polypeptide: Large ribosomal subunit protein bL21 (101 aa).

This sequence belongs to the bacterial ribosomal protein bL21 family. Part of the 50S ribosomal subunit. Contacts protein L20.

This protein binds to 23S rRNA in the presence of protein L20. This chain is Large ribosomal subunit protein bL21, found in Sulfurovum sp. (strain NBC37-1).